The chain runs to 378 residues: Acyl-coenzyme A diphosphatase NUDT19 (378 aa).

In terms of domain architecture, Nudix hydrolase spans 7-258 (HWREAASVLL…EIWLAPPQFY (252 aa)). The Nudix box motif lies at 105–126 (SPLPGEVAFRICAIRETFEEAG). Mg(2+)-binding residues include Glu-120 and Glu-124. A Microbody targeting signal motif is present at residues 376 to 378 (SRL).

Belongs to the Nudix hydrolase family. Monomer. Mg(2+) is required as a cofactor. The cofactor is Mn(2+).

Its subcellular location is the peroxisome. The catalysed reaction is an acyl-CoA + H2O = an acyl-4'-phosphopantetheine + adenosine 3',5'-bisphosphate + 2 H(+). The enzyme catalyses CoA + H2O = (R)-4'-phosphopantetheine + adenosine 3',5'-bisphosphate + 2 H(+). It catalyses the reaction hexanoyl-CoA + H2O = hexanoyl-4'-phosphopantetheine + adenosine 3',5'-bisphosphate + 2 H(+). It carries out the reaction octanoyl-CoA + H2O = S-octanoyl-4'-phosphopantetheine + adenosine 3',5'-bisphosphate + 2 H(+). The catalysed reaction is butanoyl-CoA + H2O = S-butanoyl-4'-phosphopantetheine + adenosine 3',5'-bisphosphate + 2 H(+). The enzyme catalyses propanoyl-CoA + H2O = propanoyl-4'-phosphopantetheine + adenosine 3',5'-bisphosphate + 2 H(+). It catalyses the reaction malonyl-CoA + H2O = malonyl-4'-phosphopantetheine + adenosine 3',5'-bisphosphate + 2 H(+). It carries out the reaction succinyl-CoA + H2O = succinyl-4'-phosphopantetheine + adenosine 3',5'-bisphosphate + 2 H(+). The catalysed reaction is choloyl-CoA + H2O = S-choloyl-4'-phosphopantetheine + adenosine 3',5'-bisphosphate + 2 H(+). The enzyme catalyses 4,8-dimethylnonanoyl-CoA + H2O = S-(4,8-dimethylnonanoyl)-4'-phosphopantetheine + adenosine 3',5'-bisphosphate + 2 H(+). It catalyses the reaction (9Z,12Z,15Z)-octadecatrienoyl-CoA + H2O = S-(9Z,12Z,15Z-octadecatrienoyl)-4'-phosphopantetheine + adenosine 3',5'-bisphosphate + 2 H(+). It carries out the reaction (9Z,12Z)-octadecadienoyl-CoA + H2O = S-(9Z,12Z-octadecadienoyl)-4'-phosphopantetheine + adenosine 3',5'-bisphosphate + 2 H(+). The catalysed reaction is (9Z)-hexadecenoyl-CoA + H2O = S-(9Z-hexadecenoyl)-4'-phosphopantetheine + adenosine 3',5'-bisphosphate + 2 H(+). The enzyme catalyses (9Z)-tetradecenoyl-CoA + H2O = S-(9Z-tetradecenoyl)-4'-phosphopantetheine + adenosine 3',5'-bisphosphate + 2 H(+). It catalyses the reaction (6Z)-octenoyl-CoA + H2O = S-(6Z-octenoyl)-4'-phosphopantetheine + adenosine 3',5'-bisphosphate + 2 H(+). It carries out the reaction hexadecanoyl-CoA + H2O = S-hexadecanoyl-4'-phosphopantetheine + adenosine 3',5'-bisphosphate + 2 H(+). The catalysed reaction is tetradecanoyl-CoA + H2O = tetradecanoyl-4'-phosphopantetheine + adenosine 3',5'-bisphosphate + 2 H(+). The enzyme catalyses dodecanoyl-CoA + H2O = S-dodecanoyl-4'-phosphopantetheine + adenosine 3',5'-bisphosphate + 2 H(+). It catalyses the reaction a 5'-end CoA-ribonucleoside in mRNA + H2O = a 5'-end phospho-adenosine-phospho-ribonucleoside in mRNA + (R)-4'-phosphopantetheine + 2 H(+). Functionally, fatty acyl-coenzyme A (CoA) diphosphatase that hydrolyzes fatty acyl-CoA to yield acyl-4'-phosphopantetheine and adenosine 3',5'-bisphosphate. Mediates the hydrolysis of a wide range of CoA esters, including choloyl-CoA and branched-chain fatty-acyl-CoA esters and at low substrate concentrations medium and long-chain fatty-acyl-CoA esters are the primary substrates. Highest activity seen with medium-chain acyl-CoA esters and higher rates of activity seen with the unsaturated acyl-CoA esters compared with the saturated esters. Exhibits decapping activity towards dpCoA-capped RNAs in vitro. The polypeptide is Acyl-coenzyme A diphosphatase NUDT19 (NUDT19) (Gallus gallus (Chicken)).